A 276-amino-acid chain; its full sequence is Rhomboid protease GlpG (276 aa).

A run of 6 helical transmembrane segments spans residues 94-114 (GPVTWVMMIACVVVFIAMQIL), 142-162 (ALMHFSLMHILFNLLWWWYLG), 169-189 (LGSGKLIVITLISALLSGYVQ), 192-212 (FSGPWFGGLSGVVYALMGYVW), 229-249 (LIIFALIWIVAGWFDLFGMSM), and 250-270 (ANGAHIAGLAVGLAMAFVDSL). S201 serves as the catalytic Nucleophile. H254 is an active-site residue.

The protein belongs to the peptidase S54 family.

It localises to the cell inner membrane. It carries out the reaction Cleaves type-1 transmembrane domains using a catalytic dyad composed of serine and histidine that are contributed by different transmembrane domains.. Rhomboid-type serine protease that catalyzes intramembrane proteolysis. In Escherichia coli O7:K1 (strain IAI39 / ExPEC), this protein is Rhomboid protease GlpG.